The chain runs to 141 residues: 6,7-dimethyl-8-ribityllumazine synthase (141 aa).

Residues Phe13, 45-47 (SFE), and 69-71 (AII) each bind 5-amino-6-(D-ribitylamino)uracil. (2S)-2-hydroxy-3-oxobutyl phosphate is bound at residue 74-75 (DT). The active-site Proton donor is the His77. Leu102 serves as a coordination point for 5-amino-6-(D-ribitylamino)uracil. Arg117 is a binding site for (2S)-2-hydroxy-3-oxobutyl phosphate.

The protein belongs to the DMRL synthase family.

The enzyme catalyses (2S)-2-hydroxy-3-oxobutyl phosphate + 5-amino-6-(D-ribitylamino)uracil = 6,7-dimethyl-8-(1-D-ribityl)lumazine + phosphate + 2 H2O + H(+). Its pathway is cofactor biosynthesis; riboflavin biosynthesis; riboflavin from 2-hydroxy-3-oxobutyl phosphate and 5-amino-6-(D-ribitylamino)uracil: step 1/2. Catalyzes the formation of 6,7-dimethyl-8-ribityllumazine by condensation of 5-amino-6-(D-ribitylamino)uracil with 3,4-dihydroxy-2-butanone 4-phosphate. This is the penultimate step in the biosynthesis of riboflavin. The chain is 6,7-dimethyl-8-ribityllumazine synthase from Methanopyrus kandleri (strain AV19 / DSM 6324 / JCM 9639 / NBRC 100938).